Consider the following 293-residue polypeptide: GTPase Era (293 aa).

The 167-residue stretch at 2–168 (KILFSTIIGR…INEIKKYSYE (167 aa)) folds into the Era-type G domain. Residues 10 to 17 (GRPNVGKS) form a G1 region. A GTP-binding site is contributed by 10–17 (GRPNVGKS). The segment at 36–40 (QATRD) is G2. A G3 region spans residues 57 to 60 (DTPG). Residues 57–61 (DTPGI) and 118–121 (TKID) contribute to the GTP site. The G4 stretch occupies residues 118–121 (TKID). Positions 147–149 (ISS) are G5. The region spanning 199–279 (LEQELPHSIL…KLFLKIKVKK (81 aa)) is the KH type-2 domain.

It belongs to the TRAFAC class TrmE-Era-EngA-EngB-Septin-like GTPase superfamily. Era GTPase family. In terms of assembly, monomer.

The protein resides in the cytoplasm. The protein localises to the cell membrane. In terms of biological role, an essential GTPase that binds both GDP and GTP, with rapid nucleotide exchange. Plays a role in 16S rRNA processing and 30S ribosomal subunit biogenesis and possibly also in cell cycle regulation and energy metabolism. The chain is GTPase Era from Mycoplasmopsis pulmonis (strain UAB CTIP) (Mycoplasma pulmonis).